The chain runs to 356 residues: Transcription elongation factor, mitochondrial (356 aa).

A mitochondrion-targeting transit peptide spans Met1–Lys35.

Belongs to the TEFM family. In terms of assembly, interacts with POLRMT.

It localises to the mitochondrion matrix. It is found in the mitochondrion nucleoid. Functionally, transcription elongation factor which increases mitochondrial RNA polymerase processivity. Regulates transcription of the mitochondrial genome, including genes important for the oxidative phosphorylation machinery. The chain is Transcription elongation factor, mitochondrial (TEFM) from Bos taurus (Bovine).